Reading from the N-terminus, the 556-residue chain is Arginine--tRNA ligase (556 aa).

The short motif at 132 to 142 (ANPTGNLHLGH) is the 'HIGH' region element.

Belongs to the class-I aminoacyl-tRNA synthetase family. As to quaternary structure, monomer.

The protein localises to the cytoplasm. It carries out the reaction tRNA(Arg) + L-arginine + ATP = L-arginyl-tRNA(Arg) + AMP + diphosphate. The protein is Arginine--tRNA ligase of Bacillus licheniformis (strain ATCC 14580 / DSM 13 / JCM 2505 / CCUG 7422 / NBRC 12200 / NCIMB 9375 / NCTC 10341 / NRRL NRS-1264 / Gibson 46).